The chain runs to 101 residues: Small ribosomal subunit protein uS14 (101 aa).

The interval 44-74 is disordered; that stretch reads ASRKLSRLPRDSSPVRLRNRDQVDGRPRGYV. Over residues 61-70 the composition is skewed to basic and acidic residues; that stretch reads RNRDQVDGRP.

The protein belongs to the universal ribosomal protein uS14 family. As to quaternary structure, part of the 30S ribosomal subunit. Contacts proteins S3 and S10.

Its function is as follows. Binds 16S rRNA, required for the assembly of 30S particles and may also be responsible for determining the conformation of the 16S rRNA at the A site. In Cutibacterium acnes (strain DSM 16379 / KPA171202) (Propionibacterium acnes), this protein is Small ribosomal subunit protein uS14.